The following is a 1665-amino-acid chain: Cortactin-binding protein 2 (1665 aa).

Disordered regions lie at residues 1 to 23 (MATD…AGAT), 201 to 235 (EEKK…SEFD), 360 to 441 (ASHG…LHPG), 455 to 480 (GNAN…PTSR), and 499 to 617 (RFTS…PKPS). Positions 120–276 (KMQERMSTQL…EQLKRGNDNK (157 aa)) form a coiled coil. The segment covering 385–395 (GPSTGSTADLT) has biased composition (polar residues). The residue at position 499 (Arg499) is an Asymmetric dimethylarginine. Residues 584–594 (TVASPPSSLPQ) show a composition bias toward polar residues. ANK repeat units follow at residues 710 to 740 (GRPT…DINY), 744 to 773 (DGHS…QVDA), 777 to 806 (NGFT…NINH), 810 to 839 (GGQT…DRSI), 843 to 872 (DGWT…PAHG), and 914 to 944 (EGWT…EPER). The interval 1447 to 1484 (CSKKKGESGAWRKVSTSPRKKSSRFSSPTWNKPDLSEE) is disordered. Ser1526 carries the post-translational modification Phosphoserine. Over residues 1544–1562 (SESDISKIADSRDDLRRFD) the composition is skewed to basic and acidic residues. The segment at 1544-1648 (SESDISKIAD…RQIEINNNSK (105 aa)) is disordered. Polar residues-rich tracts occupy residues 1564 to 1576 (PGNN…TVNN) and 1584 to 1604 (KEVS…QSKT). Over residues 1626-1640 (SQNTKRSSSSSNTRQ) the composition is skewed to low complexity.

Interacts with CTTN/cortactin SH3 domain. Interacts with STRN, STRN4/zinedin and MOB4/phocein; this interactions mediate the association with the STRIPAK core complex and may regulate dendritic spine distribution of the STRIPAK complex in hippocampal neurons. Activation of glutamate receptors weakens the interaction with STRN and STRN4.

It is found in the cytoplasm. Its subcellular location is the cell cortex. The protein localises to the cell projection. The protein resides in the dendritic spine. Regulates the dendritic spine distribution of CTTN/cortactin in hippocampal neurons, and thus controls dendritic spinogenesis and dendritic spine maintenance. Associates with the striatin-interacting phosphatase and kinase (STRIPAK) core complex to regulate dendritic spine distribution of the STRIPAK complex in hippocampal neurons. This is Cortactin-binding protein 2 (CTTNBP2) from Equus caballus (Horse).